A 243-amino-acid polypeptide reads, in one-letter code: Exosome complex component Rrp41 (243 aa).

Belongs to the RNase PH family. Rrp41 subfamily. As to quaternary structure, component of the archaeal exosome complex. Forms a hexameric ring-like arrangement composed of 3 Rrp41-Rrp42 heterodimers. The hexameric ring associates with a trimer of Rrp4 and/or Csl4 subunits.

It localises to the cytoplasm. Catalytic component of the exosome, which is a complex involved in RNA degradation. Has 3'-&gt;5' exoribonuclease activity. Can also synthesize heteromeric RNA-tails. The chain is Exosome complex component Rrp41 from Cenarchaeum symbiosum (strain A).